The sequence spans 197 residues: ATP-dependent Clp protease proteolytic subunit 1 (197 aa).

Ser99 (nucleophile) is an active-site residue. His124 is a catalytic residue.

The protein belongs to the peptidase S14 family. As to quaternary structure, fourteen ClpP subunits assemble into 2 heptameric rings which stack back to back to give a disk-like structure with a central cavity, resembling the structure of eukaryotic proteasomes.

Its subcellular location is the cytoplasm. It catalyses the reaction Hydrolysis of proteins to small peptides in the presence of ATP and magnesium. alpha-casein is the usual test substrate. In the absence of ATP, only oligopeptides shorter than five residues are hydrolyzed (such as succinyl-Leu-Tyr-|-NHMec, and Leu-Tyr-Leu-|-Tyr-Trp, in which cleavage of the -Tyr-|-Leu- and -Tyr-|-Trp bonds also occurs).. Cleaves peptides in various proteins in a process that requires ATP hydrolysis. Has a chymotrypsin-like activity. Plays a major role in the degradation of misfolded proteins. The polypeptide is ATP-dependent Clp protease proteolytic subunit 1 (Treponema denticola (strain ATCC 35405 / DSM 14222 / CIP 103919 / JCM 8153 / KCTC 15104)).